The primary structure comprises 220 residues: 7-cyano-7-deazaguanine synthase (220 aa).

7–17 lines the ATP pocket; sequence LSGGMDSSITA. Residues Cys-185, Cys-193, Cys-196, and Cys-199 each coordinate Zn(2+).

The protein belongs to the QueC family. Requires Zn(2+) as cofactor.

It catalyses the reaction 7-carboxy-7-deazaguanine + NH4(+) + ATP = 7-cyano-7-deazaguanine + ADP + phosphate + H2O + H(+). Its pathway is purine metabolism; 7-cyano-7-deazaguanine biosynthesis. Its function is as follows. Catalyzes the ATP-dependent conversion of 7-carboxy-7-deazaguanine (CDG) to 7-cyano-7-deazaguanine (preQ(0)). In Nitratiruptor sp. (strain SB155-2), this protein is 7-cyano-7-deazaguanine synthase.